A 214-amino-acid polypeptide reads, in one-letter code: Protein DMP6 (214 aa).

A run of 4 helical transmembrane segments spans residues 52-72 (LANL…PICT), 83-103 (FMTA…SFTD), 143-163 (FIDF…VLFD), and 178-198 (VVEL…MVFA).

This sequence belongs to the plant DMP1 protein family. As to expression, expressed constitutively in leaves, stems, flowers, siliques and roots (e.g. root hairs).

The protein resides in the vacuole membrane. Involved in membrane remodeling. The chain is Protein DMP6 from Arabidopsis thaliana (Mouse-ear cress).